Consider the following 98-residue polypeptide: Small ribosomal subunit protein uS19 (98 aa).

A disordered region spans residues threonine 77–lysine 98.

It belongs to the universal ribosomal protein uS19 family.

In terms of biological role, protein S19 forms a complex with S13 that binds strongly to the 16S ribosomal RNA. The sequence is that of Small ribosomal subunit protein uS19 from Chlorobium phaeobacteroides (strain BS1).